The sequence spans 443 residues: Ribulose bisphosphate carboxylase large chain (443 aa).

2 residues coordinate substrate: Asn89 and Thr139. The Proton acceptor role is filled by Lys141. Residue Lys143 participates in substrate binding. 3 residues coordinate Mg(2+): Lys167, Asp169, and Glu170. Lys167 carries the post-translational modification N6-carboxylysine. His260 serves as the catalytic Proton acceptor. Arg261, His293, and Ser345 together coordinate substrate.

Belongs to the RuBisCO large chain family. Type I subfamily. In terms of assembly, heterohexadecamer of 8 large chains and 8 small chains; disulfide-linked. The disulfide link is formed within the large subunit homodimers. Requires Mg(2+) as cofactor. The disulfide bond which can form in the large chain dimeric partners within the hexadecamer appears to be associated with oxidative stress and protein turnover.

The protein localises to the plastid. Its subcellular location is the chloroplast. The catalysed reaction is 2 (2R)-3-phosphoglycerate + 2 H(+) = D-ribulose 1,5-bisphosphate + CO2 + H2O. The enzyme catalyses D-ribulose 1,5-bisphosphate + O2 = 2-phosphoglycolate + (2R)-3-phosphoglycerate + 2 H(+). Its function is as follows. RuBisCO catalyzes two reactions: the carboxylation of D-ribulose 1,5-bisphosphate, the primary event in carbon dioxide fixation, as well as the oxidative fragmentation of the pentose substrate in the photorespiration process. Both reactions occur simultaneously and in competition at the same active site. The protein is Ribulose bisphosphate carboxylase large chain of Sesamum indicum (Oriental sesame).